Reading from the N-terminus, the 3926-residue chain is Hybrid PKS-NRPS synthetase LUC5 (3926 aa).

The Ketosynthase family 3 (KS3) domain occupies 8-439 (REPIAIVGTA…GTNAHAIIES (432 aa)). Active-site for beta-ketoacyl synthase activity residues include Cys181, His318, and His359. The malonyl-CoA:ACP transacylase (MAT) domain stretch occupies residues 545–863 (VFTGQGAQWP…QGALTRNVHD (319 aa)). The N-terminal hotdog fold stretch occupies residues 932–1065 (HPLLGTRSTE…GHLRVDFGSE (134 aa)). Positions 932-1225 (HPLLGTRSTE…GLTCTSLLRP (294 aa)) are dehydratase (DH) domain. One can recognise a PKS/mFAS DH domain in the interval 932–1228 (HPLLGTRSTE…CTSLLRPGPS (297 aa)). His964 serves as the catalytic Proton acceptor; for dehydratase activity. Residues 1081 to 1228 (LTSVNIERFY…CTSLLRPGPS (148 aa)) form a C-terminal hotdog fold region. The active-site Proton donor; for dehydratase activity is Asp1138. Residues 1344-1572 (IRAVGENLTE…VNDFYDPSKY (229 aa)) form a C-methyltransferase (CMeT) domain region. A ketoreductase (KR) domain 1 region spans residues 2091–2265 (TYLLAGCTGG…AASVIHIGMI (175 aa)). The Carrier 1 domain occupies 2371 to 2448 (EMLEVVEEEF…EICSTAVASL (78 aa)). Position 2408 is an O-(pantetheine 4'-phosphoryl)serine (Ser2408). The span at 2474-2506 (VSGNGSSSSRAPTEFNSSTLKSGAQSTQGTSVS) shows a compositional bias: polar residues. The interval 2474–2518 (VSGNGSSSSRAPTEFNSSTLKSGAQSTQGTSVSGDKDTNSVDGSA) is disordered. The span at 2507–2518 (GDKDTNSVDGSA) shows a compositional bias: basic and acidic residues. The interval 2525 to 2810 (PLSFAQERIW…VNLLPLRFQL (286 aa)) is condensation. The adenylation stretch occupies residues 2979–3389 (DWVKRQPDAI…RIAGDSQIKL (411 aa)). One can recognise a Carrier 2 domain in the interval 3501-3580 (ETLTTTQERL…GMAAKIDGST (80 aa)). Ser3540 is subject to O-(pantetheine 4'-phosphoryl)serine. Residues 3619–3840 (LTGATGFLGL…DFVPVEQVAD (222 aa)) form a thiolester reductase (TE) domain region.

This sequence in the C-terminal section; belongs to the NRP synthetase family.

It participates in mycotoxin biosynthesis. Functionally, hybrid PKS-NRPS synthetase; part of the gene cluster that mediates the biosynthesis of the mycotoxin lucilactaene and the lucilactaene-related compound NG-391 that act as cell cycle inhibitors with potent growth inhibitory activity against malarial parasites, moderate growth inhibitory activity against cancer cells, and no activity against bacteria and fungi. The hybrid PKS-NRPS synthetase LUC5 is responsible for the condensation of one acetyl-coenzyme A (CoA) unit with six malonyl-CoA units and the amide linkage of the arising heptaketide and homoserine, subsequently releasing the first intermediate prelucilactaene B, as an alcohol with an open ring structure. Lucilactaene and NG-391 lack the 7-methyl group present in fusarins which is inserted in fusarins by the C-methyltransferase (CMeT) domain of the fusarin synthetase FUS1, suggesting that the CMet domain of LUC5 does not methylate this position. Within the pathway, both the cytochrome P450 monooxygenase LUC2 and the hydrolase LUC6 function in parallel in modification of prelucilactaene B. LUC6 may catalyze the 2-pyrrolidone ring formation to form prelucilactaene C from prelucilactaene B, followed by C-15 hydroxylation by the same enzyme to give prelucilactaene D, which is then converted to prelucilactaene E by epoxidation, and finally to prelucilactaene F by cyclization. Prelucilactane D, prelucilactaene E, and prelucilactaene F can be converted to dihydrolucilactaene, NG391, and lucilactaene, respectively, via C-20 methyl group hydroxylation by the cytochrome P450 monooxygenase LUC2. However, LUC2, unlike FUS8 in fusarin C biosynthesis, is not enough for the full oxidation of the C-20 methyl group into carboxylic acid, which is a prerequisite for the final methylation step. The aldehyde dehydrogenase LUC3 is involved in the biosynthesis by further oxidation of the C-20 alcoholic analog prelucilactaene G into a carboxylic derivative. This unidentified carboxylic derivative may be converted to demethyllucilactaene. As the last step, the methyltransferase LUC1 methylates the hydroxyl group at C-21 of demethyllucilactaene to generate lucilactaene. The protein is Hybrid PKS-NRPS synthetase LUC5 of Fusarium sp.